The chain runs to 37 residues: Large ribosomal subunit protein bL36 (37 aa).

The protein belongs to the bacterial ribosomal protein bL36 family.

This is Large ribosomal subunit protein bL36 from Solidesulfovibrio magneticus (strain ATCC 700980 / DSM 13731 / RS-1) (Desulfovibrio magneticus).